The following is a 377-amino-acid chain: Chaperone protein DnaJ (377 aa).

In terms of domain architecture, J spans 5–70 (DYYEILGVSK…EKRSAYDQYG (66 aa)). Residues 131–209 (GVVREICVPT…CRGSGRIERT (79 aa)) form a CR-type zinc finger. The Zn(2+) site is built by Cys-144, Cys-147, Cys-161, Cys-164, Cys-183, Cys-186, Cys-197, and Cys-200. CXXCXGXG motif repeat units lie at residues 144-151 (CLQCRGSG), 161-168 (CVTCHGHG), 183-190 (CPSCNGHG), and 197-204 (CNKCRGSG).

Belongs to the DnaJ family. As to quaternary structure, homodimer. Zn(2+) is required as a cofactor.

It localises to the cytoplasm. Functionally, participates actively in the response to hyperosmotic and heat shock by preventing the aggregation of stress-denatured proteins and by disaggregating proteins, also in an autonomous, DnaK-independent fashion. Unfolded proteins bind initially to DnaJ; upon interaction with the DnaJ-bound protein, DnaK hydrolyzes its bound ATP, resulting in the formation of a stable complex. GrpE releases ADP from DnaK; ATP binding to DnaK triggers the release of the substrate protein, thus completing the reaction cycle. Several rounds of ATP-dependent interactions between DnaJ, DnaK and GrpE are required for fully efficient folding. Also involved, together with DnaK and GrpE, in the DNA replication of plasmids through activation of initiation proteins. The sequence is that of Chaperone protein DnaJ from Blochmanniella floridana.